Here is a 155-residue protein sequence, read N- to C-terminus: Large ribosomal subunit protein eL24 (155 aa).

The disordered stretch occupies residues 87 to 155 (LELIKERRSQ…SFQKVKATSR (69 aa)). A compositionally biased stretch (basic and acidic residues) spans 89–129 (LIKERRSQKPSDRKAARDSKLAKDKEAKKAAKAARKAEKAK). Low complexity predominate over residues 130 to 143 (AVASGASVVSKQQA).

The protein belongs to the eukaryotic ribosomal protein eL24 family. Component of the large ribosomal subunit. Mature ribosomes consist of a small (40S) and a large (60S) subunit. The 40S subunit contains about 32 different proteins and 1 molecule of RNA (18S). The 60S subunit contains 45 different proteins and 3 molecules of RNA (25S, 5.8S and 5S).

The protein resides in the cytoplasm. Component of the ribosome, a large ribonucleoprotein complex responsible for the synthesis of proteins in the cell. The small ribosomal subunit (SSU) binds messenger RNAs (mRNAs) and translates the encoded message by selecting cognate aminoacyl-transfer RNA (tRNA) molecules. The large subunit (LSU) contains the ribosomal catalytic site termed the peptidyl transferase center (PTC), which catalyzes the formation of peptide bonds, thereby polymerizing the amino acids delivered by tRNAs into a polypeptide chain. The nascent polypeptides leave the ribosome through a tunnel in the LSU and interact with protein factors that function in enzymatic processing, targeting, and the membrane insertion of nascent chains at the exit of the ribosomal tunnel. The sequence is that of Large ribosomal subunit protein eL24 from Candida albicans (strain SC5314 / ATCC MYA-2876) (Yeast).